Here is a 254-residue protein sequence, read N- to C-terminus: Proteasome subunit alpha (254 aa).

Positions 231-254 are disordered; it reads ESGAASADGEAETEAETDSGSDEE. A compositionally biased stretch (acidic residues) spans 239-254; sequence GEAETEAETDSGSDEE.

Belongs to the peptidase T1A family. In terms of assembly, the 20S proteasome core is composed of 14 alpha and 14 beta subunits that assemble into four stacked heptameric rings, resulting in a barrel-shaped structure. The two inner rings, each composed of seven catalytic beta subunits, are sandwiched by two outer rings, each composed of seven alpha subunits. The catalytic chamber with the active sites is on the inside of the barrel. Has probably a gated structure, the ends of the cylinder being occluded by the N-termini of the alpha-subunits. Is likely capped by the proteasome-associated ATPase, ARC. Post-translationally, the N-terminus is blocked.

It is found in the cytoplasm. It participates in protein degradation; proteasomal Pup-dependent pathway. With respect to regulation, the formation of the proteasomal ATPase ARC-20S proteasome complex, likely via the docking of the C-termini of ARC into the intersubunit pockets in the alpha-rings, may trigger opening of the gate for substrate entry. Interconversion between the open-gate and close-gate conformations leads to a dynamic regulation of the 20S proteasome proteolysis activity. Peptidolytic activity is completely inhibited by lactacystin, and to a lesser extent, by N-acetyl-Leu-Leu-norleucinal (Ac-LLnL) and benzoyloxycarbonyl-Leu-Leu-Leu-vinylsulfone (Z-LLL-VS) in vitro. Component of the proteasome core, a large protease complex with broad specificity involved in protein degradation. The S.coelicolor proteasome is able to cleave oligopeptides after hydrophobic residues, but not after basic or acidic residues, thus displaying chymotrypsin-like activity but not trypsin-like activity. This Streptomyces coelicolor (strain ATCC BAA-471 / A3(2) / M145) protein is Proteasome subunit alpha.